The chain runs to 76 residues: MATGTPAHEFRELDNAELENRLKDAKEELFNLRFQKATGQLTNNRRIGTVKRDIARIYTVLRERELGLSVAPGAEA.

It belongs to the universal ribosomal protein uL29 family.

This Corynebacterium aurimucosum (strain ATCC 700975 / DSM 44827 / CIP 107346 / CN-1) (Corynebacterium nigricans) protein is Large ribosomal subunit protein uL29.